The following is a 784-amino-acid chain: E3 UFM1-protein ligase 1 homolog (784 aa).

The interval 405–480 (SVSTQELEDD…RGGGAGNKKA (76 aa)) is disordered. Basic residues predominate over residues 444 to 454 (KSTKKHQRGKA).

This sequence belongs to the UFL1 family.

In terms of biological role, E3 UFM1-protein ligase that mediates ufmylation of target proteins. This Drosophila yakuba (Fruit fly) protein is E3 UFM1-protein ligase 1 homolog.